A 124-amino-acid polypeptide reads, in one-letter code: Riboflavin kinase (124 aa).

10–15 (GLGKAA) is a CDP binding site. Positions 39 and 41 each coordinate Mg(2+). Residues Thr93 and Glu101 each contribute to the FMN site. 106–109 (DKLR) is a CDP binding site.

Belongs to the archaeal riboflavin kinase family. Mg(2+) serves as cofactor.

It catalyses the reaction riboflavin + CTP = CDP + FMN + H(+). Its pathway is cofactor biosynthesis; FMN biosynthesis; FMN from riboflavin (CTP route): step 1/1. Its function is as follows. Catalyzes the CTP-dependent phosphorylation of riboflavin (vitamin B2) to form flavin mononucleotide (FMN). The polypeptide is Riboflavin kinase (Methanobrevibacter smithii (strain ATCC 35061 / DSM 861 / OCM 144 / PS)).